A 77-amino-acid chain; its full sequence is uncharacterized protein (77 aa).

Residues Phe-36–Val-52 traverse the membrane as a helical segment.

The protein localises to the membrane. This is an uncharacterized protein from Saccharomyces cerevisiae (strain ATCC 204508 / S288c) (Baker's yeast).